We begin with the raw amino-acid sequence, 268 residues long: Enoyl-[acyl-carrier-protein] reductase [NADH] 2 (268 aa).

NAD(+) contacts are provided by residues Gly-14, 20-21 (SI), Gln-41, 65-66 (DV), and Ile-93. Active-site proton acceptor residues include Tyr-146 and Tyr-156. NAD(+) is bound by residues Lys-163 and 192 to 196 (IRTLA).

The protein belongs to the short-chain dehydrogenases/reductases (SDR) family. FabI subfamily.

It is found in the cell inner membrane. The catalysed reaction is a 2,3-saturated acyl-[ACP] + NAD(+) = a (2E)-enoyl-[ACP] + NADH + H(+). It functions in the pathway lipid metabolism; fatty acid biosynthesis. The sequence is that of Enoyl-[acyl-carrier-protein] reductase [NADH] 2 (fabI2) from Rhizobium meliloti (strain 1021) (Ensifer meliloti).